A 562-amino-acid chain; its full sequence is Thermosome subunit alpha (562 aa).

Disordered stretches follow at residues M1–E23 and G526–G551. Over residues G537–G551 the composition is skewed to gly residues.

This sequence belongs to the TCP-1 chaperonin family. As to quaternary structure, forms an oligomeric complex of eight-membered rings.

In terms of biological role, molecular chaperone; binds unfolded polypeptides in vitro, and has a weak ATPase activity. This chain is Thermosome subunit alpha (thsA), found in Halobacterium salinarum (strain ATCC 700922 / JCM 11081 / NRC-1) (Halobacterium halobium).